The sequence spans 288 residues: MQVIIISGLSGSGKSIALKVLEDSGYYCVDNLPASLLVVLINHLQTQQHAYVAVAIDMRSGENITVLPWQLKMIDKSIQIKFIFLEARTETLMQRFSETRRRHPLSDKNITLEEAIRREREALATLTGLGHHIDTSSLRPNVLRAFIKDFIADSRSPSQLTLLFQSFGYKHGIPLDADLVFDIRCLPNPFYDPQLKELTGHDPEVIRFMESQPDASKMLRDISSFLGTWLPAYIRDNRAYLTVAIGCTGGQHRSVYFAEKLALHFHDSAHVLVRHRGLAEYKPHYARR.

8-15 is an ATP binding site; the sequence is GLSGSGKS. Residue 57–60 participates in GTP binding; sequence DMRS.

It belongs to the RapZ-like family.

In terms of biological role, displays ATPase and GTPase activities. The chain is Nucleotide-binding protein NE1849 from Nitrosomonas europaea (strain ATCC 19718 / CIP 103999 / KCTC 2705 / NBRC 14298).